The primary structure comprises 279 residues: Tryptophan 2,3-dioxygenase (279 aa).

Substrate-binding positions include 48 to 52 (FIIQH), Tyr110, and Arg114. His237 contacts heme. Thr251 is a binding site for substrate.

The protein belongs to the tryptophan 2,3-dioxygenase family. In terms of assembly, homotetramer. Heme serves as cofactor.

The catalysed reaction is L-tryptophan + O2 = N-formyl-L-kynurenine. Its pathway is amino-acid degradation; L-tryptophan degradation via kynurenine pathway; L-kynurenine from L-tryptophan: step 1/2. Its function is as follows. Heme-dependent dioxygenase that catalyzes the oxidative cleavage of the L-tryptophan (L-Trp) pyrrole ring and converts L-tryptophan to N-formyl-L-kynurenine. Catalyzes the oxidative cleavage of the indole moiety. This Bradyrhizobium sp. (strain BTAi1 / ATCC BAA-1182) protein is Tryptophan 2,3-dioxygenase.